We begin with the raw amino-acid sequence, 499 residues long: 3-beta-hydroxylase (499 aa).

The helical; Signal-anchor for type II membrane protein transmembrane segment at 2-22 (FSSFETLILSFVSLFFMMIFI) threads the bilayer. A heme-binding site is contributed by Cys441.

The protein belongs to the cytochrome P450 family. The cofactor is heme.

The protein localises to the membrane. It catalyses the reaction (+)-costunolide + reduced [NADPH--hemoprotein reductase] + O2 = 3beta-hydroxycostunolide + oxidized [NADPH--hemoprotein reductase] + H2O + H(+). It carries out the reaction parthenolide + reduced [NADPH--hemoprotein reductase] + O2 = 3beta-hydroxyparthenolide + oxidized [NADPH--hemoprotein reductase] + H2O + H(+). It participates in secondary metabolite biosynthesis; terpenoid biosynthesis. Involved in the biosynthesis of germacrene-derived sesquiterpene lactones. Component of the parthenolide biosynthetic pathway; parthenolide and conjugates are promising anti-cancer drugs highly active against colon cancer cells. Catalyzes the conversion of costunolide and parthenolide to 3-beta-hydroxycostunolide and 3-beta-hydroxyparthenolide, respectively. The sequence is that of 3-beta-hydroxylase from Tanacetum parthenium (Feverfew).